A 1090-amino-acid polypeptide reads, in one-letter code: Protein transport protein Sec24A (1090 aa).

Disordered stretches follow at residues 1-260 and 272-325; these read MAQP…AHNT and TPQL…TQTP. The segment covering 8–28 has biased composition (low complexity); the sequence is AARGAAASLQAQNGAASASGS. Polar residues-rich tracts occupy residues 29-55, 138-151, and 162-184; these read PYTN…SQPP, WQYN…QTNH, and GNPN…QTSF. Residues 194–236 show a composition bias toward pro residues; it reads QNPPLPPTFQPGAPPGPPPAGGPPPSRGPAPQKTPPRAAPPPS. Polar residues-rich tracts occupy residues 237–258, 274–286, and 313–325; these read FNSA…TAAH, QLVN…SRSV, and SYPS…TQTP. Zn(2+) contacts are provided by cysteine 428, cysteine 431, cysteine 449, and cysteine 452. The zinc finger-like stretch occupies residues 428–452; the sequence is CRSCRTYINPFVNFLDQRRWKCNLC. The Gelsolin-like repeat unit spans residues 963–1036; that stretch reads PQPPILQLSV…PESARIAAFI (74 aa).

It belongs to the SEC23/SEC24 family. SEC24 subfamily. In terms of assembly, COPII is composed of at least five proteins: the Sec23/24 complex, the Sec13/31 complex and Sar1. Interacts with TMED2. Interacts (as part of the Sec23/24 complex) with SEC22B; recruits SEC22B into COPII-coated vesicles for its transport from the endoplasmic reticulum to the Golgi. Interacts with STING1; promoting STING1 translocation to COPII vesicles in a STEEP1-dependent manner. Interacts with TMEM39A. Interacts with SACM1L; this interaction is reduced in the absence of TMEM39A. Interacts with kinase FAM20C; transport of FAM20C from the endoplasmic reticulum to the Golgi is likely to be mediated by COPII vesicles.

It localises to the cytoplasmic vesicle. The protein localises to the COPII-coated vesicle membrane. It is found in the endoplasmic reticulum membrane. Its subcellular location is the cytoplasm. The protein resides in the cytosol. Its function is as follows. Component of the coat protein complex II (COPII) which promotes the formation of transport vesicles from the endoplasmic reticulum (ER). The coat has two main functions, the physical deformation of the endoplasmic reticulum membrane into vesicles and the selection of cargo molecules for their transport to the Golgi complex. Plays a central role in cargo selection within the COPII complex and together with SEC24B may have a different specificity compared to SEC24C and SEC24D. May package preferentially cargos with cytoplasmic DxE or LxxLE motifs and may also recognize conformational epitopes. The chain is Protein transport protein Sec24A from Mus musculus (Mouse).